The chain runs to 348 residues: A-type ATP synthase subunit C (348 aa).

The protein belongs to the V-ATPase V0D/AC39 subunit family. In terms of assembly, has multiple subunits with at least A(3), B(3), C, D, E, F, H, I and proteolipid K(x).

It localises to the cell membrane. Component of the A-type ATP synthase that produces ATP from ADP in the presence of a proton gradient across the membrane. This chain is A-type ATP synthase subunit C, found in Haloferax volcanii (strain ATCC 29605 / DSM 3757 / JCM 8879 / NBRC 14742 / NCIMB 2012 / VKM B-1768 / DS2) (Halobacterium volcanii).